Reading from the N-terminus, the 80-residue chain is Clavanin-D (80 aa).

The N-terminal stretch at 1-19 (MKTTILILLILGLGINAKS) is a signal peptide. The propeptide occupies 20–29 (LEERKSEEEK). The residue at position 52 (Phe-52) is a Phenylalanine amide. Residues 54 to 80 (DDQQDNGKFYGHYAEDNGKHWYDTGDQ) constitute a propeptide that is removed on maturation.

In terms of tissue distribution, hemocytes and pharyngeal tissues.

The protein resides in the secreted. Its function is as follows. Has antimicrobial activity against E.coli, L.monocytogenes and C.albicans. The sequence is that of Clavanin-D from Styela clava (Sea squirt).